The sequence spans 415 residues: MTSSKTGQITIRSIGAGGDGVANLPDGQIYVPFTLPGEVVNVARDKNRATLMALLEASPERQNPACRHFEDCGGCALQHWQDEPYRLWKRELVVGALKGRGTDVEVAPLVACNPHTRRRAVFAARKTEKGVLLGFNRHQSHEIIDIVECPVTVPEIIARLDDLREVGALLAPGSGPFKLAATLTESGLDLAASGCGKLNDEQRRALTALVIKKDFARLSHEGEIIVEPKKPLIHFGKVPVPIPPGCFLQATAEAEETMAALVLAHLGKARRVADLFCGVGTFALRIAEKSAVHAVENDAAALAALDRGVRHVQGLKPVSIERRDLFRRPLMTKELLPYNAVVFDPPRAGAEEQALELAKSKVEKVVAISCNPVTLARDLAILQKGGYRIERVTPIDQFLWSAHVEAVAVLTKGRQ.

[4Fe-4S] cluster contacts are provided by Cys66, Cys72, Cys75, and Cys149. 4 residues coordinate S-adenosyl-L-methionine: Gln249, Phe276, Glu296, and Asp344. Cys370 serves as the catalytic Nucleophile.

This sequence belongs to the class I-like SAM-binding methyltransferase superfamily. RNA M5U methyltransferase family.

This is an uncharacterized protein from Brucella melitensis biotype 1 (strain ATCC 23456 / CCUG 17765 / NCTC 10094 / 16M).